Reading from the N-terminus, the 281-residue chain is Large ribosomal subunit protein uL2 (281 aa).

The interval 213–281 is disordered; it reads RNRHKGIRPT…LIIRRRKESK (69 aa).

The protein belongs to the universal ribosomal protein uL2 family. Part of the 50S ribosomal subunit. Forms a bridge to the 30S subunit in the 70S ribosome.

In terms of biological role, one of the primary rRNA binding proteins. Required for association of the 30S and 50S subunits to form the 70S ribosome, for tRNA binding and peptide bond formation. It has been suggested to have peptidyltransferase activity; this is somewhat controversial. Makes several contacts with the 16S rRNA in the 70S ribosome. This Mycoplasmopsis pulmonis (strain UAB CTIP) (Mycoplasma pulmonis) protein is Large ribosomal subunit protein uL2.